A 1116-amino-acid polypeptide reads, in one-letter code: Large proline-rich protein bag6-B (1116 aa).

Positions 7–82 constitute a Ubiquitin-like domain; sequence MDVTVKTLDS…HLVERAPPQT (76 aa). Disordered regions lie at residues 76–114, 170–221, 329–385, 473–502, 533–589, 640–678, and 1058–1080; these read ERAPPQTQTSTSGPSTSSSTSPSSSNAAPVPGAPERNGN, EGQP…PSEY, STTG…HPHP, PAAPSFNFQPGAAATTPPAPGGATTTAPGA, GGSS…GTDQ, VPVSTSPPQSASQAPPPPSSPAPPAHSAPPPAAAPESLP, and TGAKPESSTECVKRELDNSEAQG. A compositionally biased stretch (low complexity) spans 79 to 100; sequence PPQTQTSTSGPSTSSSTSPSSS. Positions 194–207 are enriched in polar residues; sequence RETLPQTTQNADGQ. A compositionally biased stretch (low complexity) spans 208 to 219; sequence SNSTPTSHPSPS. Residues 344-353 are compositionally biased toward polar residues; sequence GNATPSTNTS. 3 stretches are compositionally biased toward low complexity: residues 482 to 502, 535 to 580, and 641 to 652; these read PGAAATTPPAPGGATTTAPGA, SSTS…SVPS, and PVSTSPPQSASQ. Positions 653–672 are enriched in pro residues; it reads APPPPSSPAPPAHSAPPPAA. The segment covering 1068-1080 has biased composition (basic and acidic residues); the sequence is CVKRELDNSEAQG.

As to quaternary structure, component of the bag6/bat3 complex.

The protein resides in the cytoplasm. The protein localises to the cytosol. It localises to the nucleus. Its subcellular location is the secreted. It is found in the extracellular exosome. In terms of biological role, ATP-independent molecular chaperone preventing the aggregation of misfolded and hydrophobic patches-containing proteins. Functions as part of a cytosolic protein quality control complex, the bag6/bat3 complex, which maintains these client proteins in a soluble state and participates in their proper delivery to the endoplasmic reticulum or alternatively can promote their sorting to the proteasome where they undergo degradation. The bag6/bat3 complex is involved in the post-translational delivery of tail-anchored/type II transmembrane proteins to the endoplasmic reticulum membrane. Similarly, the bag6/bat3 complex also functions as a sorting platform for proteins of the secretory pathway that are mislocalized to the cytosol either delivering them to the proteasome for degradation or to the endoplasmic reticulum. The bag6/bat3 complex also plays a role in the endoplasmic reticulum-associated degradation (ERAD), a quality control mechanism that eliminates unwanted proteins of the endoplasmic reticulum through their retrotranslocation to the cytosol and their targeting to the proteasome. It maintains these retrotranslocated proteins in an unfolded yet soluble state condition in the cytosol to ensure their proper delivery to the proteasome. Also required for selective ubiquitin-mediated degradation of defective nascent chain polypeptides by the proteasome. Also involved in endoplasmic reticulum stress-induced pre-emptive quality control, a mechanism that selectively attenuates the translocation of newly synthesized proteins into the endoplasmic reticulum and reroutes them to the cytosol for proteasomal degradation. May ensure the proper degradation of these proteins and thereby protects the endoplasmic reticulum from protein overload upon stress. By stabilizing a large spectrum of proteins, may indirectly affect different biological processes including apoptosis. By controlling the steady-state expression of the IGF1R receptor, indirectly regulates the insulin-like growth factor receptor signaling pathway. When nuclear, may also act as a component of some chromatin regulator complex. This chain is Large proline-rich protein bag6-B, found in Xenopus laevis (African clawed frog).